Here is a 229-residue protein sequence, read N- to C-terminus: PKHD-type hydroxylase BRADO4652 (229 aa).

The 103-residue stretch at 78–180 (QIFPPLFNRY…RVASFFWMQS (103 aa)) folds into the Fe2OG dioxygenase domain. Residues His-98, Asp-100, and His-161 each contribute to the Fe cation site. Arg-171 provides a ligand contact to 2-oxoglutarate.

The cofactor is Fe(2+). It depends on L-ascorbate as a cofactor.

In Bradyrhizobium sp. (strain ORS 278), this protein is PKHD-type hydroxylase BRADO4652.